The following is a 387-amino-acid chain: Phosphoglycerate kinase (387 aa).

Residues 21–23, R36, 59–62, R113, and R146 contribute to the substrate site; these read DLN and HLGR. ATP is bound by residues K197, E314, and 340–343; that span reads GGDT.

This sequence belongs to the phosphoglycerate kinase family. As to quaternary structure, monomer.

The protein resides in the cytoplasm. The enzyme catalyses (2R)-3-phosphoglycerate + ATP = (2R)-3-phospho-glyceroyl phosphate + ADP. Its pathway is carbohydrate degradation; glycolysis; pyruvate from D-glyceraldehyde 3-phosphate: step 2/5. This Pseudomonas putida (strain W619) protein is Phosphoglycerate kinase.